The following is a 215-amino-acid chain: Cytochrome c biogenesis ATP-binding export protein CcmA (215 aa).

The region spanning 8 to 215 (LQATALACER…RDLDLGQWSA (208 aa)) is the ABC transporter domain. Residue 40-47 (GPNGCGKT) coordinates ATP.

The protein belongs to the ABC transporter superfamily. CcmA exporter (TC 3.A.1.107) family. In terms of assembly, the complex is composed of two ATP-binding proteins (CcmA) and two transmembrane proteins (CcmB).

Its subcellular location is the cell inner membrane. It catalyses the reaction heme b(in) + ATP + H2O = heme b(out) + ADP + phosphate + H(+). In terms of biological role, part of the ABC transporter complex CcmAB involved in the biogenesis of c-type cytochromes; once thought to export heme, this seems not to be the case, but its exact role is uncertain. Responsible for energy coupling to the transport system. The polypeptide is Cytochrome c biogenesis ATP-binding export protein CcmA (Pseudomonas syringae pv. syringae (strain B728a)).